The primary structure comprises 226 residues: Leucyl/phenylalanyl-tRNA--protein transferase (226 aa).

Belongs to the L/F-transferase family.

The protein localises to the cytoplasm. The enzyme catalyses N-terminal L-lysyl-[protein] + L-leucyl-tRNA(Leu) = N-terminal L-leucyl-L-lysyl-[protein] + tRNA(Leu) + H(+). It carries out the reaction N-terminal L-arginyl-[protein] + L-leucyl-tRNA(Leu) = N-terminal L-leucyl-L-arginyl-[protein] + tRNA(Leu) + H(+). It catalyses the reaction L-phenylalanyl-tRNA(Phe) + an N-terminal L-alpha-aminoacyl-[protein] = an N-terminal L-phenylalanyl-L-alpha-aminoacyl-[protein] + tRNA(Phe). Functionally, functions in the N-end rule pathway of protein degradation where it conjugates Leu, Phe and, less efficiently, Met from aminoacyl-tRNAs to the N-termini of proteins containing an N-terminal arginine or lysine. This chain is Leucyl/phenylalanyl-tRNA--protein transferase, found in Pseudomonas entomophila (strain L48).